A 340-amino-acid chain; its full sequence is Phenylalanine--tRNA ligase alpha subunit (340 aa).

Residue E258 coordinates Mg(2+).

It belongs to the class-II aminoacyl-tRNA synthetase family. Phe-tRNA synthetase alpha subunit type 1 subfamily. Tetramer of two alpha and two beta subunits. Mg(2+) is required as a cofactor.

Its subcellular location is the cytoplasm. It carries out the reaction tRNA(Phe) + L-phenylalanine + ATP = L-phenylalanyl-tRNA(Phe) + AMP + diphosphate + H(+). The polypeptide is Phenylalanine--tRNA ligase alpha subunit (Corynebacterium glutamicum (strain ATCC 13032 / DSM 20300 / JCM 1318 / BCRC 11384 / CCUG 27702 / LMG 3730 / NBRC 12168 / NCIMB 10025 / NRRL B-2784 / 534)).